We begin with the raw amino-acid sequence, 369 residues long: tRNA 2-selenouridine synthase (369 aa).

The region spanning 15–138 (MLSGHPMMDV…MRQYLIEVID (124 aa)) is the Rhodanese domain. C98 serves as the catalytic S-selanylcysteine intermediate.

The protein belongs to the SelU family. As to quaternary structure, monomer.

It carries out the reaction 5-methylaminomethyl-2-thiouridine(34) in tRNA + selenophosphate + (2E)-geranyl diphosphate + H2O + H(+) = 5-methylaminomethyl-2-selenouridine(34) in tRNA + (2E)-thiogeraniol + phosphate + diphosphate. The enzyme catalyses 5-methylaminomethyl-2-thiouridine(34) in tRNA + (2E)-geranyl diphosphate = 5-methylaminomethyl-S-(2E)-geranyl-thiouridine(34) in tRNA + diphosphate. It catalyses the reaction 5-methylaminomethyl-S-(2E)-geranyl-thiouridine(34) in tRNA + selenophosphate + H(+) = 5-methylaminomethyl-2-(Se-phospho)selenouridine(34) in tRNA + (2E)-thiogeraniol. The catalysed reaction is 5-methylaminomethyl-2-(Se-phospho)selenouridine(34) in tRNA + H2O = 5-methylaminomethyl-2-selenouridine(34) in tRNA + phosphate. Functionally, involved in the post-transcriptional modification of the uridine at the wobble position (U34) of tRNA(Lys), tRNA(Glu) and tRNA(Gln). Catalyzes the conversion of 2-thiouridine (S2U-RNA) to 2-selenouridine (Se2U-RNA). Acts in a two-step process involving geranylation of 2-thiouridine (S2U) to S-geranyl-2-thiouridine (geS2U) and subsequent selenation of the latter derivative to 2-selenouridine (Se2U) in the tRNA chain. This is tRNA 2-selenouridine synthase from Shewanella sediminis (strain HAW-EB3).